The primary structure comprises 1025 residues: Multidrug resistance protein MdtC (1025 aa).

The next 12 membrane-spanning stretches (helical) occupy residues 3–23, 333–353, 360–380, 387–407, 431–451, 463–483, 528–548, 853–873, 875–895, 897–917, 953–973, and 984–1004; these read FFAL…AITL, EVEQ…FLFL, LIPA…MYLC, LSLM…IVVL, VGFT…PLLL, FAVT…TLTP, IVGL…ITIP, VILI…LYES, VHPL…LLAL, LFDA…IGIV, PIMM…ISSG, and ITIV…TPVV.

It belongs to the resistance-nodulation-cell division (RND) (TC 2.A.6) family. MdtC subfamily. As to quaternary structure, part of a tripartite efflux system composed of MdtA, MdtB and MdtC. MdtC forms a heteromultimer with MdtB.

Its subcellular location is the cell inner membrane. This Enterobacter sp. (strain 638) protein is Multidrug resistance protein MdtC.